The primary structure comprises 516 residues: uncharacterized protein (516 aa).

Positions 31–185 (ACIFLSKFDM…LDKFDIFEKF (155 aa)) constitute a uDENN domain. Positions 211–365 (HLVEYLPYWT…LEVYEKLILG (155 aa)) constitute a cDENN domain. In terms of domain architecture, dDENN spans 367–513 (LQEDASTNAT…DISNLPECLG (147 aa)). 2 S-palmitoyl cysteine lipidation sites follow: C511 and C516.

Palmitoylated by AKR1.

The protein localises to the lipid droplet. May be involved in lipid metabolism. This is an uncharacterized protein from Saccharomyces cerevisiae (strain ATCC 204508 / S288c) (Baker's yeast).